A 301-amino-acid chain; its full sequence is Putative dynamin-related protein 4A (301 aa).

Residues 59–301 (GIQLPTIVVV…LIDGDIVGIL (243 aa)) enclose the Dynamin-type G domain. Positions 69–76 (GDQSSGKS) are G1 motif. 69–76 (GDQSSGKS) lines the GTP pocket. Positions 94-96 (CTR) are G2 motif. A G3 motif region spans residues 168–171 (DLPG). GTP is bound by residues 168-172 (DLPGI) and 237-240 (TKAD). Residues 237 to 240 (TKAD) are G4 motif. Residue Glu-270 is a region of interest, G5 motif.

Belongs to the TRAFAC class dynamin-like GTPase superfamily. Dynamin/Fzo/YdjA family.

The polypeptide is Putative dynamin-related protein 4A (DRP4A) (Arabidopsis thaliana (Mouse-ear cress)).